The chain runs to 179 residues: Large ribosomal subunit protein uL5 (179 aa).

The protein belongs to the universal ribosomal protein uL5 family. As to quaternary structure, part of the 50S ribosomal subunit; part of the 5S rRNA/L5/L18/L25 subcomplex. Contacts the 5S rRNA and the P site tRNA. Forms a bridge to the 30S subunit in the 70S ribosome.

This is one of the proteins that bind and probably mediate the attachment of the 5S RNA into the large ribosomal subunit, where it forms part of the central protuberance. In the 70S ribosome it contacts protein S13 of the 30S subunit (bridge B1b), connecting the 2 subunits; this bridge is implicated in subunit movement. Contacts the P site tRNA; the 5S rRNA and some of its associated proteins might help stabilize positioning of ribosome-bound tRNAs. The polypeptide is Large ribosomal subunit protein uL5 (Rickettsia bellii (strain OSU 85-389)).